Here is a 302-residue protein sequence, read N- to C-terminus: MITILGPTACGKTRLAVSLAYRLETEIISADSRQIYRGMDIGTGKDLADYQVGGTTIPCHLIDIRPAGDKYNLFAYQHDFHQAYASILARGMDPILCGGTGMYIEAVLKGYHLPDVPPNPTLRDRLQGKSLTELTLILAAYGPLHNKTDVDSAQRAIRAIEIAEYIKNNPVESTEFPPIDSLIIGLDLDRDTRRKRITDRLHARMHEGMIEEVKGLLDSGIPAEDLIYYGLEYKFVTLYLTGQTDYESMFTGLETAIHQFAKRQMTWFRGMERRGFLIHWIDALLPADEQCEAVMKLYGANG.

6 to 13 (GPTACGKT) provides a ligand contact to ATP. 8–13 (TACGKT) contributes to the substrate binding site. 2 interaction with substrate tRNA regions span residues 31 to 34 (DSRQ) and 154 to 158 (QRAIR).

Belongs to the IPP transferase family. In terms of assembly, monomer. The cofactor is Mg(2+).

It carries out the reaction adenosine(37) in tRNA + dimethylallyl diphosphate = N(6)-dimethylallyladenosine(37) in tRNA + diphosphate. Catalyzes the transfer of a dimethylallyl group onto the adenine at position 37 in tRNAs that read codons beginning with uridine, leading to the formation of N6-(dimethylallyl)adenosine (i(6)A). This is tRNA dimethylallyltransferase 2 from Porphyromonas gingivalis (strain ATCC BAA-308 / W83).